The chain runs to 251 residues: B3 domain-containing protein At2g24670 (251 aa).

The tract at residues 48-111 (TTPSTVMESK…SSKTREPTPG (64 aa)) is disordered. A compositionally biased stretch (basic and acidic residues) spans 56–70 (SKSHIHDHSLRESPT). Residues 153 to 249 (VSQIVELEFL…TLYFALVPLY (97 aa)) constitute a DNA-binding region (TF-B3).

Its subcellular location is the nucleus. The polypeptide is B3 domain-containing protein At2g24670 (Arabidopsis thaliana (Mouse-ear cress)).